Reading from the N-terminus, the 274-residue chain is Bis(5'-nucleosyl)-tetraphosphatase, symmetrical (274 aa).

Belongs to the Ap4A hydrolase family.

The catalysed reaction is P(1),P(4)-bis(5'-adenosyl) tetraphosphate + H2O = 2 ADP + 2 H(+). Hydrolyzes diadenosine 5',5'''-P1,P4-tetraphosphate to yield ADP. The chain is Bis(5'-nucleosyl)-tetraphosphatase, symmetrical from Shewanella loihica (strain ATCC BAA-1088 / PV-4).